The sequence spans 316 residues: Olfactory receptor 5AP2 (316 aa).

Residues 1-34 (MRLMKEVRGRNQTEVTEFLLLGLSDNPDLQGVLF) lie on the Extracellular side of the membrane. The N-linked (GlcNAc...) asparagine glycan is linked to asparagine 11. A helical membrane pass occupies residues 35–55 (ALFLLIYMANMVGNLGMIVLI). Position 56 (lysine 56) is a topological domain, cytoplasmic. The chain crosses the membrane as a helical span at residues 57–77 (IDLCLHTPMYFFLSSLSFVDA). Residues 78-104 (SYSSSVTPKMLVNLMAENKAISFHGCA) lie on the Extracellular side of the membrane. Cysteines 103 and 195 form a disulfide. Residues 105-125 (AQFYFFGSFLGTECFLLAMMA) traverse the membrane as a helical segment. Residues 126–135 (YDRYAAIWNP) are Cytoplasmic-facing. Residues 136–156 (LLYPVLVSGRICFLLIATSFL) form a helical membrane-spanning segment. The Extracellular portion of the chain corresponds to 157 to 210 (AGCGNAAIHTGMTFRLSFCGSNRINHFYCDTPPLLKLSCSDTHFNGIVIMAFSS). The helical transmembrane segment at 211–231 (FIVISCVMIVLISYLCIFIAV) threads the bilayer. Residues 232-245 (LKMPSLEGRHKAFS) are Cytoplasmic-facing. Residues 246 to 266 (TCASYLMAVTIFFGTILFMYL) form a helical membrane-spanning segment. At 267–278 (RPTSSYSMEQDK) the chain is on the extracellular side. The chain crosses the membrane as a helical span at residues 279–299 (VVSVFYTVIIPVLNPLIYSLK). At 300 to 316 (NKDVKKALKKILWKHIL) the chain is on the cytoplasmic side.

The protein belongs to the G-protein coupled receptor 1 family.

Its subcellular location is the cell membrane. In terms of biological role, odorant receptor. The protein is Olfactory receptor 5AP2 of Homo sapiens (Human).